Consider the following 455-residue polypeptide: MKKDFASVTPAGKKTSVRWFIVFMLFLVTSINYADRATLSITGDSVQHDLGLDSVAMGYVFSAFGWAYVIGQLPGGWLLDRFGSKTIIALSIFFWSFFTLLQGAIGFFSAGTAIILLFALRFLVGLSEAPSFPGNGRVVASWFPSSERGTASAFFNSAQYFAIVIFSPLMGWLTHSFGWHSVFVVMGIAGILLAVIWLKTVYEPKKHPKVNEAELAYIEQGGGLISMDDSKSKQETESKWPYIKQLLTNRMLIGVYIAQYCITTLTYFFLTWFPVYLVQARGMSILEAGFVASLPALCGFAGGVLGGIVSDILLKKGRSLTFARKVPIIAGMLLSCSMIVCNYTDSAWLVVVIMSLAFFGKGFGALGWAVVSDTSPKECAGLSGGLFNTFGNIASITTPIIIGYIVNATGSFNGALVFVGANAIAAILSYLLLVGPIKRVVLKKQEQDPDQSLPV.

12 helical membrane-spanning segments follow: residues 19 to 39 (WFIV…RATL), 59 to 79 (YVFS…GWLL), 87 to 107 (IIAL…AIGF), 108 to 128 (FSAG…GLSE), 153 to 173 (AFFN…MGWL), 177 to 197 (FGWH…AVIW), 253 to 273 (IGVY…LTWF), 289 to 309 (GFVA…GGIV), 320 to 340 (LTFA…SMIV), 348 to 368 (WLVV…ALGW), 386 to 406 (LFNT…GYIV), and 414 to 434 (GALV…LLLV).

It belongs to the major facilitator superfamily. Phthalate permease family.

The protein localises to the cell membrane. It carries out the reaction galactarate(in) + H(+)(in) = galactarate(out) + H(+)(out). The enzyme catalyses D-glucarate(in) + H(+)(in) = D-glucarate(out) + H(+)(out). Probably involved in the uptake of galactarate and/or D-glucarate. In Bacillus subtilis (strain 168), this protein is Probable galactarate/D-glucarate transporter GudP.